The sequence spans 392 residues: Chorismate synthase (392 aa).

NADP(+) is bound by residues Arg39 and Arg45. FMN is bound by residues 131 to 133 (RSS), 255 to 256 (NA), Gly300, 315 to 319 (KPIPT), and Arg341.

It belongs to the chorismate synthase family. In terms of assembly, homotetramer. It depends on FMNH2 as a cofactor.

The enzyme catalyses 5-O-(1-carboxyvinyl)-3-phosphoshikimate = chorismate + phosphate. It functions in the pathway metabolic intermediate biosynthesis; chorismate biosynthesis; chorismate from D-erythrose 4-phosphate and phosphoenolpyruvate: step 7/7. Functionally, catalyzes the anti-1,4-elimination of the C-3 phosphate and the C-6 proR hydrogen from 5-enolpyruvylshikimate-3-phosphate (EPSP) to yield chorismate, which is the branch point compound that serves as the starting substrate for the three terminal pathways of aromatic amino acid biosynthesis. This reaction introduces a second double bond into the aromatic ring system. The polypeptide is Chorismate synthase (Leuconostoc mesenteroides subsp. mesenteroides (strain ATCC 8293 / DSM 20343 / BCRC 11652 / CCM 1803 / JCM 6124 / NCDO 523 / NBRC 100496 / NCIMB 8023 / NCTC 12954 / NRRL B-1118 / 37Y)).